Here is a 294-residue protein sequence, read N- to C-terminus: Tryptophan 2,3-dioxygenase 1 (294 aa).

Residues 1–20 are disordered; the sequence is MSEPIQPTRPAASGCPMHGA. Substrate is bound by residues 63–67, Y125, and R129; that span reads FIVQH. A heme-binding site is contributed by H252. Substrate is bound at residue T266.

It belongs to the tryptophan 2,3-dioxygenase family. In terms of assembly, homotetramer. It depends on heme as a cofactor.

The catalysed reaction is L-tryptophan + O2 = N-formyl-L-kynurenine. The protein operates within amino-acid degradation; L-tryptophan degradation via kynurenine pathway; L-kynurenine from L-tryptophan: step 1/2. Its function is as follows. Heme-dependent dioxygenase that catalyzes the oxidative cleavage of the L-tryptophan (L-Trp) pyrrole ring and converts L-tryptophan to N-formyl-L-kynurenine. Catalyzes the oxidative cleavage of the indole moiety. The chain is Tryptophan 2,3-dioxygenase 1 from Ralstonia nicotianae (strain ATCC BAA-1114 / GMI1000) (Ralstonia solanacearum).